The following is a 125-amino-acid chain: Translation initiation factor 5A (125 aa).

At Lys-36 the chain carries Hypusine.

Belongs to the eIF-5A family.

Its subcellular location is the cytoplasm. In terms of biological role, functions by promoting the formation of the first peptide bond. The sequence is that of Translation initiation factor 5A (eIF5A) from Halorubrum lacusprofundi (strain ATCC 49239 / DSM 5036 / JCM 8891 / ACAM 34).